We begin with the raw amino-acid sequence, 89 residues long: UPF0237 protein DIP1286 (89 aa).

Residues I4–Q78 form the ACT domain.

The protein belongs to the UPF0237 family.

The sequence is that of UPF0237 protein DIP1286 from Corynebacterium diphtheriae (strain ATCC 700971 / NCTC 13129 / Biotype gravis).